The following is a 324-amino-acid chain: Ribosomal RNA small subunit methyltransferase H (324 aa).

S-adenosyl-L-methionine-binding positions include 47–49, Asp-67, Leu-96, Asp-115, and Gln-122; that span reads GGH.

Belongs to the methyltransferase superfamily. RsmH family.

It is found in the cytoplasm. The catalysed reaction is cytidine(1402) in 16S rRNA + S-adenosyl-L-methionine = N(4)-methylcytidine(1402) in 16S rRNA + S-adenosyl-L-homocysteine + H(+). Functionally, specifically methylates the N4 position of cytidine in position 1402 (C1402) of 16S rRNA. The sequence is that of Ribosomal RNA small subunit methyltransferase H from Halorhodospira halophila (strain DSM 244 / SL1) (Ectothiorhodospira halophila (strain DSM 244 / SL1)).